Here is a 363-residue protein sequence, read N- to C-terminus: Chalcone synthase B (363 aa).

C170 is a catalytic residue.

The protein belongs to the thiolase-like superfamily. Chalcone/stilbene synthases family.

It carries out the reaction (E)-4-coumaroyl-CoA + 3 malonyl-CoA + 3 H(+) = 2',4,4',6'-tetrahydroxychalcone + 3 CO2 + 4 CoA. The protein operates within secondary metabolite biosynthesis; flavonoid biosynthesis. Its function is as follows. The primary product of this enzyme is 4,2',4',6'-tetrahydroxychalcone (also termed naringenin-chalcone or chalcone) which can under specific conditions spontaneously isomerize into naringenin. In Ipomoea nil (Japanese morning glory), this protein is Chalcone synthase B (CHSB).